The primary structure comprises 3414 residues: MLSVRLLIVVLALANAENLVRKSVEHLTQEETLDLQAALRELQMDSSSIGFQKIAAAHGAPASCVHKDTSIACCIHGMPTFPHWHRAYVVHMERALQTKRRTSGLPYWDWTEPITQLPSLAADPVYIDSQGGKAHTNYWYRGNIDFLDKKTNRAVDDRLFEKVKPGQHTHLMESVLDALEQDEFCKFEIQFELAHNAIHYLVGGKHDYSMANLEYTAYDPIFFLHHSNVDRIFAIWQRLQELRNKDPKAMDCAQELLHQKMEPFSWEDNDIPLTNEHSTPADLFDYCELHYDYDTLNLNGMTPEELKTYLDERSSRARAFASFRLKGFGGSANVFVYVCIPDDNDRNDDHCEKAGDFFVLGGPSEMKWQFYRPYLFDLSDTVHKMGMKLDGHYTVKAELFSVNGTALPDDLLPHPVVVHHPEKGFTDPPVKHHQSANLLVRKNINDLTREEVLNLREAFHKFQEDRSVDGYQATAEYHGLPARCPRPDAKDRYACCVHGMPIFPHWHRLFVTQVEDALVGRGATIGIPYWDWTEPMTHIPGLAGNKTYVDSHGASHTNPFHSSVIAFEENAPHTKRQIDQRLFKPATFGHHTDLFNQILYAFEQEDYCDFEVQFEITHNTIHAWTGGSEHFSMSSLHYTAFDPLFYFHHSNVDRLWAVWQALQMRRHKPYRAHCAISLEHMHLKPFAFSSPLNNNEKTHANAMPNKIYDYENVLHYTYEDLTFGGISLENIEKMIHENQQEDRIYAGFLLAGIRTSANVDIFIKTTDSVQHKAGTFAVLGGSKEMKWGFDRVFKFDITHVLKDLDLTADGDFEVTVDITEVDGTKLASSLIPHASVIREHARVKFDKVPRSRLIRKNVDRLSPEEMNELRKALALLKEDKSAGGFQQLGAFHGEPKWCPSPEASKKFACCVHGMSVFPHWHRLLTVQSENALRRHGYDGALPYWDWTSPLNHLPELADHEKYVDPEDGVEKHNPWFDGHIDTVDKTTTRSVQNKLFEQPEFGHYTSIAKQVLLALEQDNFCDFEIQYEIAHNYIHALVGGAQPYGMASLRYTAFDPLFYLHHSNTDRIWAIWQALQKYRGKPYNVANCAVTSMREPLQPFGLSANINTDHVTKEHSVPFNVFDYKTNFNYEYDTLEFNGLSISQLNKKLEAIKSQDRFFAGFLLSGFKKSSLVKFNICTDSSNCHPAGEFYLLGDENEMPWAYDRVFKYDITEKLHDLKLHAEDHFYIDYEVFDLKPASLGKDLFKQPSVIHEPRIGHHEGEVYQAEVTSANRIRKNIENLSLGELESLRAAFLEIENDGTYESIAKFHGSPGLCQLNGNPISCCVHGMPTFPHWHRLYVVVVENALLKKGSSVAVPYWDWTKRIEHLPHLISDATYYNSRQHHYETNPFHHGKITHENEITTRDPKDSLFHSDYFYEQVLYALEQDNFCDFEIQLEILHNALHSLLGGKGKYSMSNLDYAAFDPVFFLHHATTDRIWAIWQDLQRFRKRPYREANCAIQLMHTPLQPFDKSDNNDEATKTHATPHDGFEYQNSFGYAYDNLELNHYSIPQLDHMLQERKRHDRVFAGFLLHNIGTSADGHVFVCLPTGEHTKDCSHEAGMFSILGGQTEMSFVFDRLYKLDITKALKKNGVHLQGDFDLEIEITAVNGSHLDSHVIHSPTILFEAGTDSAHTDDGHTEPVMIRKDITQLDKRQQLSLVKALESMKADHSSDGFQAIASFHALPPLCPSPAASKRFACCVHGMATFPQWHRLYTVQFQDSLRKHGAVVGLPYWDWTLPRSELPELLTVSTIHDPETGRDIPNPFIGSKIEFEGENVHTKRDINRDRLFQGSTKTHHNWFIEQALLALEQTNYCDFEVQFEIMHNGVHTWVGGKEPYGIGHLHYASYDPLFYIHHSQTDRIWAIWQSLQRFRGLSGSEANCAVNLMKTPLKPFSFGAPYNLNDHTHDFSKPEDTFDYQKFGYIYDTLEFAGWSIRGIDHIVRNRQEHSRVFAGFLLEGFGTSATVDFQVCRTAGDCEDAGYFTVLGGEKEMPWAFDRLYKYDITETLDKMNLRHDEIFQIEVTITSYDGTVLDSGLIPTPSIIYDPAHHDISSHHLSLNKVRHDLSTLSERDIGSLKYALSSLQADTSADGFAAIASFHGLPAKCNDSHNNEVACCIHGMPTFPHWHRLYTLQFEQALRRHGSSVAVPYWDWTKPIHNIPHLFTDKEYYDVWRNKVMPNPFARGYVPSHDTYTVRDVQEGLFHLTSTGEHSALLNQALLALEQHDYCDFAVQFEVMHNTIHYLVGGPQVYSLSSLHYASYDPIFFIHHSFVDKVWAVWQALQEKRGLPSDRADCAVSLMTQNMRPFHYEINHNQFTKKHAVPNDVFKYELLGYRYDNLEIGGMNLHEIEKEIKDKQHHVRVFAGFLLHGIRTSADVQFQICKTSEDCHHGGQIFVLGGTKEMAWAYNRLFKYDITHALHDAHITPEDVFHPSEPFFIKVSVTAVNGTVLPASILHAPTIIYEPGLDHHEDHHSSSMAGHGVRKEINTLTTAEVDNLKDAMRAVMADHGPNGYQAIAAFHGNPPMCPMPDGKNYSCCTHGMATFPHWHRLYTKQMEDALTAHGARVGLPYWDGTTAFTALPTFVTDEEDNPFHHGHIDYLGVDTTRSPRDKLFNDPERGSESFFYRQVLLALEQTDFCQFEVQFEITHNAIHSWTGGLTPYGMSTLEYTTYDPLFWLHHANTDRIWAIWQALQEYRGLPYDHANCEIQAMKRPLRPFSDPINHNAFTHSNAKPTDVFEYSRFNFQYDNLRFHGMTIKKLEHELEKQKEEDRTFAAFLLHGIKKSADVSFDVCNHDGECHFAGTFAILGGEHEMPWSFDRLFRYDITQVLKQMHLEYDSDFTFHMRIIDTSGKQLPSDLIKMPTVEHSPGGKHHEKHHEDHHEDILVRKNIHSLSHHEAEELRDALYKLQNDESHGGYEHIAGFHGYPNLCPEKGDEKYPCCVHGMSIFPHWHRLHTIQFERALKKHGSHLGIPYWDWTQTISSLPTFFADSGNNNPFFKYHIRSINQDTVRDVNEAIFQQTKFGEFSSIFYLALQALEEDNYCDFEVQYEILHNEVHALIGGAEKYSMSTLEYSAFDPYFMIHHASLDKIWIIWQELQKRRVKPAHAGSCAGDIMHVPLHPFNYESVNNDDFTRENSLPNAVVDSHRFNYKYDNLNLHGHNIEELEEVLRSLRLKSRVFAGFVLSGIRTTAVVKVYIKSGTDSDDEYAGSFVILGGAKEMPWAYERLYRFDITETVHNLNLTDDHVKFRFDLKKYDHTELDASVLPAPIIVRRPNNAVFDIIEIPIGKDVNLPPKVVVKRGTKIMFMSVDEAVTTPMLNLGSYTAMFKCKVPPFSFHAFELGKMYSVESGDYFMTASTTELCNDNNLRIHVHVDDE.

Residues 1-16 form the signal peptide; it reads MLSVRLLIVVLALANA. Residue Glu17 coordinates a divalent metal cation. The interval 17–437 is functional unit a (wall); the sequence is ENLVRKSVEH…PPVKHHQSAN (421 aa). Residue His58 coordinates Cu cation. Cys64 and Cys73 form a disulfide bridge. The segment at residues 74 to 76 is a cross-link (2'-(S-cysteinyl)-histidine (Cys-His)); it reads CIH. Cu cation contacts are provided by His76, His85, His195, His199, and His226. Residues Cys185 and Cys252 are joined by a disulfide bond. The segment at residues 287–290 is a cross-link (2'-(S-cysteinyl)-histidine (Cys-His)); sequence CELH. Cys339 and Cys351 are oxidised to a cystine. Asn403 carries N-linked (GlcNAc...) asparagine glycosylation. The interval 438-851 is functional unit b (wall); it reads LLVRKNINDL…RVKFDKVPRS (414 aa). Residue His478 coordinates Cu cation. A disulfide bond links Cys484 and Cys495. The 2'-(S-cysteinyl)-histidine (Cys-His) cross-link spans 496 to 498; sequence CVH. Positions 498 and 507 each coordinate Cu cation. N-linked (GlcNAc...) asparagine glycosylation is present at Asn545. Cys608 and Cys674 are disulfide-bonded. Cu cation is bound by residues His618, His622, and His649. A WD 1 repeat occupies 628 to 669; it reads SEHFSMSSLHYTAFDPLFYFHHSNVDRLWAVWQALQMRRHKP. Glu737 serves as a coordination point for a divalent metal cation. A functional unit c (wall) region spans residues 852-1271; sequence RLIRKNVDRL…EVYQAEVTSA (420 aa). His892 is a binding site for Cu cation. Cys898 and Cys909 are oxidised to a cystine. The segment at residues 910–912 is a cross-link (2'-(S-cysteinyl)-histidine (Cys-His)); the sequence is CVH. Cu cation contacts are provided by His912, His921, His1031, His1035, and His1062. 2 disulfide bridges follow: Cys1021/Cys1088 and Cys1178/Cys1184. One copy of the WD 2 repeat lies at 1041–1082; that stretch reads AQPYGMASLRYTAFDPLFYLHHSNTDRIWAIWQALQKYRGKP. The segment at 1272-1680 is functional unit d (wall); sequence NRIRKNIENL…AHTDDGHTEP (409 aa). His1309 lines the Cu cation pocket. Cys1315 and Cys1324 are disulfide-bonded. Positions 1325 to 1327 form a cross-link, 2'-(S-cysteinyl)-histidine (Cys-His); the sequence is CVH. The Cu cation site is built by His1327, His1336, His1440, His1444, and His1471. Disulfide bonds link Cys1430–Cys1497 and Cys1585–Cys1595. One copy of the WD 3 repeat lies at 1450 to 1491; it reads KGKYSMSNLDYAAFDPVFFLHHATTDRIWAIWQDLQRFRKRP. Asn1648 carries N-linked (GlcNAc...) asparagine glycosylation. Residues 1681–2097 are functional unit e (wall); it reads VMIRKDITQL…HDISSHHLSL (417 aa). His1721 provides a ligand contact to Cu cation. Cys1727 and Cys1738 form a disulfide bridge. The 2'-(S-cysteinyl)-histidine (Cys-His) cross-link spans 1739 to 1741; the sequence is CVH. Residues His1741, His1750, His1863, His1867, and His1894 each contribute to the Cu cation site. 2 disulfide bridges follow: Cys1853/Cys1920 and Cys2009/Cys2015. The stretch at 1873-1914 is one WD 4 repeat; that stretch reads KEPYGIGHLHYASYDPLFYIHHSQTDRIWAIWQSLQRFRGLS. The tract at residues 2098–2517 is functional unit f (wall); the sequence is NKVRHDLSTL…EDHHSSSMAG (420 aa). His2138 contacts Cu cation. A disulfide bond links Cys2144 and Cys2154. Residue Asn2145 is glycosylated (N-linked (GlcNAc...) asparagine). The segment at residues 2155–2157 is a cross-link (2'-(S-cysteinyl)-histidine (Cys-His)); the sequence is CIH. Positions 2157, 2166, 2276, 2280, and 2307 each coordinate Cu cation. A WD 5 repeat occupies 2163 to 2199; sequence PHWHRLYTLQFEQALRRHGSSVAVPYWDWTKPIHNIP. 2 disulfides stabilise this stretch: Cys2266–Cys2333 and Cys2420–Cys2426. An a divalent metal cation-binding site is contributed by Glu2424. The tract at residues 2518 to 2921 is functional unit g (internal arc); it reads HGVRKEINTL…EKHHEDHHED (404 aa). A Cu cation-binding site is contributed by His2558. A disulfide bridge connects residues Cys2564 and Cys2574. Asn2571 is a glycosylation site (N-linked (GlcNAc...) asparagine). The 2'-(S-cysteinyl)-histidine (Cys-His) cross-link spans 2575-2577; sequence CTH. Cu cation contacts are provided by His2577, His2586, His2686, His2690, and His2717. 2 cysteine pairs are disulfide-bonded: Cys2676–Cys2743 and Cys2830–Cys2836. The WD 6 repeat unit spans residues 2696–2737; it reads LTPYGMSTLEYTTYDPLFWLHHANTDRIWAIWQALQEYRGLP. The functional unit h (internal slab) stretch occupies residues 2922–3414; the sequence is ILVRKNIHSL…LRIHVHVDDE (493 aa). Position 2962 (His2962) interacts with Cu cation. A disulfide bridge links Cys2968 with Cys2978. The segment at residues 2979 to 2981 is a cross-link (2'-(S-cysteinyl)-histidine (Cys-His)); it reads CVH. Cu cation contacts are provided by His2981, His2990, His3091, His3095, and His3122. A disulfide bridge connects residues Cys3081 and Cys3148. Residues 3101–3142 form a WD 7 repeat; sequence AEKYSMSTLEYSAFDPYFMIHHASLDKIWIIWQELQKRRVKP. Residue Asn3278 is glycosylated (N-linked (GlcNAc...) asparagine). Cys3367 and Cys3400 form a disulfide bridge.

It belongs to the tyrosinase family. Hemocyanin subfamily. In terms of assembly, homo-didecamer, with two decamers assembled face-to-face at their open ends. This didecamer form a stable 25 nM cylinder wall. Probably N-glycosylated. Asn-1280 and Asn-2484 are buried deeply in the protein which make them inaccessible for sugar attachment. Asn-3278 N-glycan is likely to represent a diantennate carbohydrate tree. The didecamer is almost evenly tagged by a total of 120 sugar trees. Hemolymph.

It localises to the secreted. The protein localises to the extracellular space. Hemocyanins are copper-containing oxygen carriers occurring freely dissolved in the hemolymph of many mollusks and arthropods. The protein is Hemocyanin 1 of Megathura crenulata (Giant keyhole limpet).